Reading from the N-terminus, the 515-residue chain is Fc receptor-like protein 4 (515 aa).

The first 19 residues, Met-1–Ala-19, serve as a signal peptide directing secretion. At Ala-20–Leu-387 the chain is on the extracellular side. 4 consecutive Ig-like C2-type domains span residues Pro-23–Arg-97, Ser-102–Ile-183, Pro-193–His-271, and Pro-275–Asn-374. Disulfide bonds link Cys-44–Cys-85, Cys-123–Cys-167, Cys-212–Cys-261, and Cys-310–Cys-359. N-linked (GlcNAc...) asparagine glycosylation occurs at Asn-374. Residues Val-388–Phe-408 form a helical membrane-spanning segment. At His-409–Ser-515 the chain is on the cytoplasmic side. 3 consecutive short sequence motifs (ITIM motif) follow at residues Ser-449–Val-454, Leu-461–Ile-466, and Val-491–Val-496. A disordered region spans residues Ser-494 to Ser-515.

In terms of assembly, interacts with PTPN6 and PTPN11. Phosphorylated on cytoplasmic tyrosines upon activation. Specifically expressed by memory and monocytoid B-cells which populate spleen and lymph nodes. Preferentially expressed in memory B-cells associated with mucosal tissue (at protein level).

The protein resides in the cell membrane. Its function is as follows. May function as an inhibitor of the B-cell receptor signaling. May function in the B-cell-mediated immune response. This Homo sapiens (Human) protein is Fc receptor-like protein 4 (FCRL4).